Here is a 320-residue protein sequence, read N- to C-terminus: ATP-dependent 6-phosphofructokinase (320 aa).

ATP is bound at residue glycine 12. ADP is bound by residues 22–26 (RGVVR) and 55–60 (RYSVSD). Residues 73–74 (RF) and 103–106 (GDGS) each bind ATP. Aspartate 104 is a Mg(2+) binding site. 126–128 (TID) is a binding site for substrate. Aspartate 128 acts as the Proton acceptor in catalysis. Arginine 155 is a binding site for ADP. Substrate contacts are provided by residues arginine 163 and 170-172 (MGR). ADP contacts are provided by residues 186 to 188 (GCE), lysine 212, and 214 to 216 (KKH). Substrate is bound by residues glutamate 223, arginine 244, and 250-253 (HIQR).

It belongs to the phosphofructokinase type A (PFKA) family. ATP-dependent PFK group I subfamily. Prokaryotic clade 'B1' sub-subfamily. In terms of assembly, homotetramer. It depends on Mg(2+) as a cofactor.

The protein localises to the cytoplasm. It carries out the reaction beta-D-fructose 6-phosphate + ATP = beta-D-fructose 1,6-bisphosphate + ADP + H(+). It participates in carbohydrate degradation; glycolysis; D-glyceraldehyde 3-phosphate and glycerone phosphate from D-glucose: step 3/4. Allosterically activated by ADP and other diphosphonucleosides, and allosterically inhibited by phosphoenolpyruvate. In terms of biological role, catalyzes the phosphorylation of D-fructose 6-phosphate to fructose 1,6-bisphosphate by ATP, the first committing step of glycolysis. The sequence is that of ATP-dependent 6-phosphofructokinase from Salmonella agona (strain SL483).